The primary structure comprises 517 residues: DNA-binding protein Ikaros (517 aa).

The disordered stretch occupies residues 1 to 71 (MDVDEGQDMS…QSDEENGRAC (71 aa)). The residue at position 13 (S13) is a Phosphoserine. A Phosphothreonine modification is found at T23. The segment covering 37-47 (LSTTSGAQQNS) has biased composition (polar residues). K58 is covalently cross-linked (Glycyl lysine isopeptide (Lys-Gly) (interchain with G-Cter in SUMO)). 2 positions are modified to phosphoserine: S63 and S101. Residues 117–139 (LKCDICGIVCIGPNVLMVHKRSH) form a C2H2-type 1 zinc finger. T140 is subject to Phosphothreonine. A C2H2-type 2 zinc finger spans residues 144–166 (FQCNQCGASFTQKGNLLRHIKLH). The required for both high-affinity DNA binding and pericentromeric heterochromatin localization stretch occupies residues 153–162 (FTQKGNLLRH). Phosphoserine is present on S167. The C2H2-type 3 zinc-finger motif lies at 172-194 (FKCHLCNYACRRRDALTGHLRTH). Residues 179–194 (YACRRRDALTGHLRTH) form a required for both high-affinity DNA binding and pericentromeric heterochromatin localization region. The residue at position 195 (S195) is a Phosphoserine. Residues 200-223 (HKCGYCGRSYKQRSSLEEHKERCH) form a C2H2-type 4 zinc finger. K239 participates in a covalent cross-link: Glycyl lysine isopeptide (Lys-Gly) (interchain with G-Cter in SUMO). 9 positions are modified to phosphoserine: S259, S287, S293, S357, S360, S384, S386, S388, and S392. The tract at residues 376–400 (SVSSEREASPSNSCQDSTDTESNAE) is disordered. The residue at position 393 (T393) is a Phosphothreonine. S397 and S440 each carry phosphoserine. C2H2-type zinc fingers lie at residues 457–479 (YKCE…MGCH) and 488–512 (FECN…RGEH). Positions 463 to 466 (RVLF) are required for binding PP1CC.

Belongs to the Ikaros C2H2-type zinc-finger protein family. Heterodimer with other IKAROS family members. Interacts with IKZF4 and IKZF5. Component of the chromatin-remodeling NuRD repressor complex which includes at least HDAC1, HDAC2, RBBP4, RBBP7, IKZF1, MTA2, MBD2, MBD3, MTA1L1, CHD3 and CHD4. Interacts directly with the CHD4 component of the NuRD complex. Interacts directly with SMARCA4; the interaction associates IKFZ1 with the BAF complex. Interacts with SUMO1; the interaction sumoylates IKAROS, promoted by PIAS2 and PIAS3. Interacts with PIAS2 (isoform alpha); the interaction promotes sumoylation and reduces transcription repression. Interacts, to a lesser extent, with PIAS3. Interacts with PPP1CC; the interaction targets PPP1CC to pericentromeric heterochromatin, dephosphorylates IKAROS, stabilizes it and prevents it from degradation. Interacts with IKZF3. In terms of processing, phosphorylation at Ser-357 and Ser-360 downstream of SYK induces nuclear translocation. Phosphorylation controls cell-cycle progression from late G(1) stage to S stage. Hyperphosphorylated during G2/M phase. Dephosphorylated state during late G(1) phase. Phosphorylation on Thr-140 is required for DNA and pericentromeric location during mitosis. CK2 is the main kinase, in vitro. GSK3 and CDK may also contribute to phosphorylation of the C-terminal serine and threonine residues. Phosphorylation on these C-terminal residues reduces the DNA-binding ability. Phosphorylation/dephosphorylation events on Ser-13 and Ser-293 regulate TDT expression during thymocyte differentiation. Dephosphorylation by protein phosphatase 1 regulates stability and pericentromeric heterochromatin location. Phosphorylated in both lymphoid and non-lymphoid tissues. Sumoylated. Simultaneous sumoylation on the 2 sites results in a loss of both HDAC-dependent and HDAC-independent repression. Has no effect on pericentromeric heterochromatin location. Desumoylated by SENP1. Post-translationally, polyubiquitinated. Strongly expressed in T-cells and their progenitors,in B-cells, and in all early embryonic retinal progenitor cells (RPCs). Isoforms V and VI are the predominant isoforms in lymphocytes.

The protein resides in the nucleus. Its subcellular location is the cytoplasm. In terms of biological role, transcription regulator of hematopoietic cell differentiation. Binds gamma-satellite DNA. Binds with higher affinity to gamma satellite A. Plays a role in the development of lymphocytes, B- and T-cells. Binds and activates the enhancer (delta-A element) of the CD3-delta gene. Repressor of the TDT (terminal deoxynucleotidyltransferase) gene during thymocyte differentiation. Regulates transcription through association with both HDAC-dependent and HDAC-independent complexes. Targets the 2 chromatin-remodeling complexes, NuRD and BAF (SWI/SNF), in a single complex (PYR complex), to the beta-globin locus in adult erythrocytes. Increases normal apoptosis in adult erythroid cells. Confers early temporal competence to retinal progenitor cells (RPCs). Function is isoform-specific and is modulated by dominant-negative inactive isoforms. The polypeptide is DNA-binding protein Ikaros (Ikzf1) (Mus musculus (Mouse)).